Consider the following 446-residue polypeptide: Probable glycine dehydrogenase (decarboxylating) subunit 1 (446 aa).

Belongs to the GcvP family. N-terminal subunit subfamily. The glycine cleavage system is composed of four proteins: P, T, L and H. In this organism, the P 'protein' is a heterodimer of two subunits.

It catalyses the reaction N(6)-[(R)-lipoyl]-L-lysyl-[glycine-cleavage complex H protein] + glycine + H(+) = N(6)-[(R)-S(8)-aminomethyldihydrolipoyl]-L-lysyl-[glycine-cleavage complex H protein] + CO2. Functionally, the glycine cleavage system catalyzes the degradation of glycine. The P protein binds the alpha-amino group of glycine through its pyridoxal phosphate cofactor; CO(2) is released and the remaining methylamine moiety is then transferred to the lipoamide cofactor of the H protein. The protein is Probable glycine dehydrogenase (decarboxylating) subunit 1 of Coxiella burnetii (strain CbuK_Q154) (Coxiella burnetii (strain Q154)).